A 240-amino-acid chain; its full sequence is Uridylate kinase (240 aa).

Residue 13 to 16 (KLSG) coordinates ATP. Residues 21 to 26 (GDKGFG) are involved in allosteric activation by GTP. Glycine 55 contributes to the UMP binding site. Residues glycine 56 and arginine 60 each contribute to the ATP site. Residues aspartate 75 and 136–143 (IGNPYFST) contribute to the UMP site. Residues asparagine 164, tyrosine 170, and aspartate 173 each coordinate ATP.

It belongs to the UMP kinase family. Homohexamer.

The protein localises to the cytoplasm. The enzyme catalyses UMP + ATP = UDP + ADP. Its pathway is pyrimidine metabolism; CTP biosynthesis via de novo pathway; UDP from UMP (UMPK route): step 1/1. Its activity is regulated as follows. Allosterically activated by GTP. Inhibited by UTP. In terms of biological role, catalyzes the reversible phosphorylation of UMP to UDP. This Staphylococcus haemolyticus (strain JCSC1435) protein is Uridylate kinase.